Here is a 669-residue protein sequence, read N- to C-terminus: MNQTIKAKLELLPDSPGCYLHKDKNGTVIYVGKAKNLKNRVRSYFHGSHNTKTELLVSEIEDLEWIVVGSNIESLVLEINLIQRYKPKYNIMLKDDKYYPFLKITNEKYPRLLVVRKVQKDGATYFGPYPDVKAANEVKRLLDRIFPFRKCGLHEKKVCFYFHIHQCLCPVVNHVDPQVYKDMTQEVKEFLTGSDKKIVKELEGKMISASDNMEFEQAAEYRDVIKAIGTLRTKQRVMNQDLKDRDVFGYYVDKGWMCVQVFFVRQGKLIQRDVNMFPYYNDAEEDFLTYIGQFYQDNNHMMPREIFIPQDIDKDSVEAVVAASQEGNLLTKAQAKAVDAKVFTAKTLKFSDQKDVEQSIVKLDKELSSEKRLSSLLAKTQIIQPSRGEKKQLVNMATKNAQTQLQLKFDVAERDILKTTKAVENLGKILGIPKPVRIESFDNSNIMGTSPVSAMVVFIDGKPSKKDYRKYKIKTVVGADDYASMREVMTRRYSRALKEETALPDLIAMDGGAGQVNIAKEVLRELGLAIPVAGMQKNDKHQTSELLFGDPLEVVPLSRQSQEFFLLTRIQDEVHRFAITFHRQLRGKNTFSSKLDGIVGLGPKRKQKLLTTFKNLKAIEEATVQEVAEAGVPYEVAERVKNTLSAPHKSDENWESIKDNVPLLKSEKS.

Residues 14–91 form the GIY-YIG domain; the sequence is DSPGCYLHKD…IQRYKPKYNI (78 aa). The 36-residue stretch at 196–231 folds into the UVR domain; that stretch reads KKIVKELEGKMISASDNMEFEQAAEYRDVIKAIGTL. The segment at 647 to 669 is disordered; sequence PHKSDENWESIKDNVPLLKSEKS. Residues 648-658 are compositionally biased toward basic and acidic residues; that stretch reads HKSDENWESIK.

Belongs to the UvrC family. In terms of assembly, interacts with UvrB in an incision complex.

Its subcellular location is the cytoplasm. The UvrABC repair system catalyzes the recognition and processing of DNA lesions. UvrC both incises the 5' and 3' sides of the lesion. The N-terminal half is responsible for the 3' incision and the C-terminal half is responsible for the 5' incision. This Lactococcus lactis subsp. cremoris (strain MG1363) protein is UvrABC system protein C.